A 359-amino-acid polypeptide reads, in one-letter code: Fructose-1,6-bisphosphatase class 1 (359 aa).

Residues Glu95, Asp117, Leu119, and Asp120 each coordinate Mg(2+). Substrate-binding positions include Asp120–Ser123 and Asn212. Glu284 provides a ligand contact to Mg(2+).

The protein belongs to the FBPase class 1 family. In terms of assembly, homotetramer. It depends on Mg(2+) as a cofactor.

The protein resides in the cytoplasm. It carries out the reaction beta-D-fructose 1,6-bisphosphate + H2O = beta-D-fructose 6-phosphate + phosphate. The protein operates within carbohydrate biosynthesis; gluconeogenesis. This chain is Fructose-1,6-bisphosphatase class 1, found in Hydrogenophilus thermoluteolus (Pseudomonas hydrogenothermophila).